Consider the following 149-residue polypeptide: Calmodulin (149 aa).

4 consecutive EF-hand domains span residues 8–43 (EQIA…LGQN), 44–79 (PTEA…KMKD), 81–116 (DSEE…LGEK), and 117–149 (LTDE…MMSK). D21, D23, D25, T27, E32, D57, D59, N61, T63, E68, D94, D96, N98, E105, D130, D132, D134, Q136, and E141 together coordinate Ca(2+).

The protein belongs to the calmodulin family.

Functionally, calmodulin mediates the control of a large number of enzymes, ion channels and other proteins by Ca(2+). Among the enzymes to be stimulated by the calmodulin-Ca(2+) complex are a number of protein kinases and phosphatases. This Globisporangium splendens (Leaf rot fungus) protein is Calmodulin.